A 565-amino-acid polypeptide reads, in one-letter code: Bifunctional dihydrofolate reductase-thymidylate synthase 2 (565 aa).

The 178-residue stretch at 65 to 242 (TYQVVVAATK…LRFSFTTHVR (178 aa)) folds into the DHFR domain. Val69 provides a ligand contact to substrate. NADP(+)-binding positions include Ala71 and 77-83 (GIGKDGK). Asp91 contributes to the substrate binding site. Residues 115–117 (RKT) and 136–139 (LSRS) each bind NADP(+). Ile178 is a binding site for substrate. 179–186 (GGGDILRE) lines the NADP(+) pocket. Thr199 provides a ligand contact to substrate. A hinge region spans residues 245–280 (SSSAGEASDESDGSKVLQVDWKKFSSVLPKMIFDRH). Positions 281–565 (EEYLYLNLVK…HKKIDMKMAV (285 aa)) are thymidylate synthase. Arg302 contacts dUMP. Cys447 is a catalytic residue. DUMP contacts are provided by residues His448, 466–470 (QRSAD), Asn478, and 508–510 (HVY).

This sequence in the N-terminal section; belongs to the dihydrofolate reductase family. It in the C-terminal section; belongs to the thymidylate synthase family. In terms of assembly, heterodimer or homodimer.

The catalysed reaction is (6S)-5,6,7,8-tetrahydrofolate + NADP(+) = 7,8-dihydrofolate + NADPH + H(+). It catalyses the reaction dUMP + (6R)-5,10-methylene-5,6,7,8-tetrahydrofolate = 7,8-dihydrofolate + dTMP. The protein operates within cofactor biosynthesis; tetrahydrofolate biosynthesis; 5,6,7,8-tetrahydrofolate from 7,8-dihydrofolate: step 1/1. Bifunctional enzyme. Involved in de novo dTMP biosynthesis. Key enzyme in folate metabolism. Can play two different roles depending on the source of dihydrofolate: de novo synthesis of tetrahydrofolate or recycling of the dihydrofolate released as one of the end products of the TS catalyzed reaction. Catalyzes an essential reaction for de novo glycine and purine synthesis, DNA precursor synthesis, and for the conversion of dUMP to dTMP. The polypeptide is Bifunctional dihydrofolate reductase-thymidylate synthase 2 (THY-2) (Arabidopsis thaliana (Mouse-ear cress)).